The following is a 999-amino-acid chain: Probable basic-leucine zipper transcription factor N (999 aa).

2 stretches are compositionally biased toward low complexity: residues Met-1 to Gln-79 and Asn-88 to Asn-126. Residues Met-1–Asn-126 form a disordered region. 2 coiled-coil regions span residues Gln-148 to Met-198 and Gly-232 to Ser-282. The segment covering Glu-286–Leu-302 has biased composition (polar residues). 3 disordered regions span residues Glu-286 to Gln-406, Gln-450 to Asn-533, and Glu-601 to Gln-620. Residues Ser-303–Asn-347 are compositionally biased toward low complexity. The segment covering Met-348–Gln-406 has biased composition (polar residues). The stretch at Ile-423–Gln-451 forms a coiled coil. The segment covering Gln-450–Gln-517 has biased composition (low complexity). A bZIP domain is found at Glu-601–Leu-664. A basic motif region spans residues Lys-602–Arg-632. The leucine-zipper stretch occupies residues Ile-636–Leu-643. Disordered regions lie at residues Lys-665–Thr-711, Gln-779–Glu-807, and Val-870–Thr-899. Positions Ser-682 to Gln-692 are enriched in acidic residues. Residues His-921–Leu-950 adopt a coiled-coil conformation.

The protein belongs to the bZIP family.

Its subcellular location is the nucleus. In terms of biological role, probable transcriptional regulator. The protein is Probable basic-leucine zipper transcription factor N (bzpN) of Dictyostelium discoideum (Social amoeba).